We begin with the raw amino-acid sequence, 688 residues long: Translation initiation factor IF-2 (688 aa).

Basic and acidic residues-rich tracts occupy residues 53-62 and 86-95; these read GKEKSEKTKE and KRDDKNEKVN. The interval 53 to 100 is disordered; sequence GKEKSEKTKEEDDEIETTAKNPIKESMNNKKSNKRDDKNEKVNTENAE. Positions 187-354 constitute a tr-type G domain; the sequence is KRSPIITVMG…MILLSSEILE (168 aa). The G1 stretch occupies residues 196–203; the sequence is GHVDHGKT. 196–203 provides a ligand contact to GTP; the sequence is GHVDHGKT. The interval 221 to 225 is G2; it reads GITQH. The G3 stretch occupies residues 242–245; that stretch reads DTPG. GTP is bound by residues 242-246 and 296-299; these read DTPGH and NKID. The tract at residues 296 to 299 is G4; the sequence is NKID. The interval 332-334 is G5; that stretch reads SAH.

Belongs to the TRAFAC class translation factor GTPase superfamily. Classic translation factor GTPase family. IF-2 subfamily.

It is found in the cytoplasm. One of the essential components for the initiation of protein synthesis. Protects formylmethionyl-tRNA from spontaneous hydrolysis and promotes its binding to the 30S ribosomal subunits. Also involved in the hydrolysis of GTP during the formation of the 70S ribosomal complex. This Clostridium botulinum (strain Kyoto / Type A2) protein is Translation initiation factor IF-2.